The chain runs to 434 residues: Methylenetetrahydrofolate--tRNA-(uracil-5-)-methyltransferase TrmFO (434 aa).

Position 9–14 (9–14 (GAGLAG)) interacts with FAD.

The protein belongs to the MnmG family. TrmFO subfamily. It depends on FAD as a cofactor.

It is found in the cytoplasm. The enzyme catalyses uridine(54) in tRNA + (6R)-5,10-methylene-5,6,7,8-tetrahydrofolate + NADH + H(+) = 5-methyluridine(54) in tRNA + (6S)-5,6,7,8-tetrahydrofolate + NAD(+). The catalysed reaction is uridine(54) in tRNA + (6R)-5,10-methylene-5,6,7,8-tetrahydrofolate + NADPH + H(+) = 5-methyluridine(54) in tRNA + (6S)-5,6,7,8-tetrahydrofolate + NADP(+). Its function is as follows. Catalyzes the folate-dependent formation of 5-methyl-uridine at position 54 (M-5-U54) in all tRNAs. The sequence is that of Methylenetetrahydrofolate--tRNA-(uracil-5-)-methyltransferase TrmFO from Listeria welshimeri serovar 6b (strain ATCC 35897 / DSM 20650 / CCUG 15529 / CIP 8149 / NCTC 11857 / SLCC 5334 / V8).